The chain runs to 701 residues: Elongation factor G (701 aa).

The tr-type G domain maps to 8–291 (SRYRNIGIVA…AVIDYLPAPV (284 aa)). GTP-binding positions include 17-24 (AHVDAGKT), 89-93 (DTPGH), and 143-146 (NKMD).

It belongs to the TRAFAC class translation factor GTPase superfamily. Classic translation factor GTPase family. EF-G/EF-2 subfamily.

It localises to the cytoplasm. Its function is as follows. Catalyzes the GTP-dependent ribosomal translocation step during translation elongation. During this step, the ribosome changes from the pre-translocational (PRE) to the post-translocational (POST) state as the newly formed A-site-bound peptidyl-tRNA and P-site-bound deacylated tRNA move to the P and E sites, respectively. Catalyzes the coordinated movement of the two tRNA molecules, the mRNA and conformational changes in the ribosome. The sequence is that of Elongation factor G from Pseudomonas fluorescens (strain SBW25).